A 230-amino-acid polypeptide reads, in one-letter code: 3,4-dihydroxy-2-butanone 4-phosphate synthase (230 aa).

D-ribulose 5-phosphate is bound by residues 42–43 (RE), Asp-47, 155–159 (RRGHT), and Glu-179. A Mg(2+)-binding site is contributed by Glu-43. His-158 is a Mg(2+) binding site.

This sequence belongs to the DHBP synthase family. In terms of assembly, homodimer. Requires Mg(2+) as cofactor. The cofactor is Mn(2+).

It catalyses the reaction D-ribulose 5-phosphate = (2S)-2-hydroxy-3-oxobutyl phosphate + formate + H(+). It functions in the pathway cofactor biosynthesis; riboflavin biosynthesis; 2-hydroxy-3-oxobutyl phosphate from D-ribulose 5-phosphate: step 1/1. In terms of biological role, catalyzes the conversion of D-ribulose 5-phosphate to formate and 3,4-dihydroxy-2-butanone 4-phosphate. This is 3,4-dihydroxy-2-butanone 4-phosphate synthase from Bordetella pertussis (strain Tohama I / ATCC BAA-589 / NCTC 13251).